Consider the following 92-residue polypeptide: Small ribosomal subunit protein uS19 (92 aa).

A disordered region spans residues 73–92; the sequence is EFSPTRSFRGHAGAKNKGKK. A compositionally biased stretch (basic residues) spans 80 to 92; it reads FRGHAGAKNKGKK.

It belongs to the universal ribosomal protein uS19 family.

Functionally, protein S19 forms a complex with S13 that binds strongly to the 16S ribosomal RNA. The sequence is that of Small ribosomal subunit protein uS19 from Flavobacterium psychrophilum (strain ATCC 49511 / DSM 21280 / CIP 103535 / JIP02/86).